Here is an 891-residue protein sequence, read N- to C-terminus: Fanconi-associated nuclease 1 homolog (891 aa).

Positions 712, 833, 852, and 853 each coordinate Mn(2+). One can recognise a VRR-NUC domain in the interval 770–884 (GMAEEILIIS…GFNVEICKVR (115 aa)).

The protein belongs to the FAN1 family. The cofactor is Mn(2+). Requires Mg(2+) as cofactor.

It localises to the nucleus. It carries out the reaction Hydrolytically removes 5'-nucleotides successively from the 3'-hydroxy termini of 3'-hydroxy-terminated oligonucleotides.. Nuclease required for the repair of DNA interstrand cross-links (ICLs). Acts as a 5'-3' exonuclease that anchors at a cut end of DNA and cleaves DNA successively at every third nucleotide, allowing to excise an ICL from one strand through flanking incisions. May act upstream of the helicase RECQL4A and the ATPase RAD5A, which is involved in error-free post-replicative repair. Functions independently of MUS81 pathway, but in a similar pathway with RECQ4A, RAD5A and MFH1 in ICL repair. The chain is Fanconi-associated nuclease 1 homolog from Arabidopsis thaliana (Mouse-ear cress).